We begin with the raw amino-acid sequence, 563 residues long: Merozoite receptor PK66 (563 aa).

The first 13 residues, 1–13 (MNKIYYILFLSAQ), serve as a signal peptide directing secretion. Residues 14–487 (CLVHMGKCER…DGKHKKKMLL (474 aa)) are Extracellular-facing. 6 N-linked (GlcNAc...) asparagine glycosylation sites follow: asparagine 36, asparagine 107, asparagine 176, asparagine 189, asparagine 238, and asparagine 441. Residues 488 to 508 (IIIGVTGAVCVVAVASLFYFR) traverse the membrane as a helical segment. The Cytoplasmic segment spans residues 509–563 (KKAQDDKYDKMDQAEAYGKTANTRKDEMLDPEASFWGEDKRASHTTPVLMEKPYY).

Belongs to the apicomplexan parasites AMA1 family.

It localises to the membrane. Merozoite receptor PK66 is a surface antigen involved in parasite invasion of erythrocytes. This Plasmodium knowlesi (strain nuri) protein is Merozoite receptor PK66 (PK66).